Here is a 304-residue protein sequence, read N- to C-terminus: Porphobilinogen deaminase (304 aa).

Cys-240 is modified (S-(dipyrrolylmethanemethyl)cysteine).

It belongs to the HMBS family. In terms of assembly, monomer. Requires dipyrromethane as cofactor.

It catalyses the reaction 4 porphobilinogen + H2O = hydroxymethylbilane + 4 NH4(+). It functions in the pathway porphyrin-containing compound metabolism; protoporphyrin-IX biosynthesis; coproporphyrinogen-III from 5-aminolevulinate: step 2/4. In terms of biological role, tetrapolymerization of the monopyrrole PBG into the hydroxymethylbilane pre-uroporphyrinogen in several discrete steps. In Xanthomonas axonopodis pv. citri (strain 306), this protein is Porphobilinogen deaminase.